Consider the following 140-residue polypeptide: Regulator of ribonuclease activity B (140 aa).

The tract at residues 115-140 (FEDPNAQDDDEDDGEAIDEDDNGIRH) is disordered. Residues 119 to 140 (NAQDDDEDDGEAIDEDDNGIRH) are compositionally biased toward acidic residues.

It belongs to the RraB family. Interacts with the C-terminal region of Rne.

The protein resides in the cytoplasm. In terms of biological role, globally modulates RNA abundance by binding to RNase E (Rne) and regulating its endonucleolytic activity. Can modulate Rne action in a substrate-dependent manner by altering the composition of the degradosome. This chain is Regulator of ribonuclease activity B, found in Pantoea ananatis (strain LMG 20103).